The primary structure comprises 337 residues: ATP-dependent 6-phosphofructokinase (337 aa).

Position 11 (Gly11) interacts with ATP. Arg21–Arg25 is an ADP binding site. ATP is bound by residues Arg72–Tyr73 and Gly102–Ser105. Residue Asp103 participates in Mg(2+) binding. Residue Thr125–Asp127 participates in substrate binding. Asp127 functions as the Proton acceptor in the catalytic mechanism. Arg154 is an ADP binding site. Residues Arg162 and Met169–Arg171 contribute to the substrate site. ADP contacts are provided by residues Gly185–Asp187, Arg212, and Lys214–His216. Substrate-binding positions include Glu223, Arg245, and His251 to Arg254.

It belongs to the phosphofructokinase type A (PFKA) family. ATP-dependent PFK group I subfamily. Prokaryotic clade 'B1' sub-subfamily. Homotetramer. Mg(2+) is required as a cofactor.

Its subcellular location is the cytoplasm. It carries out the reaction beta-D-fructose 6-phosphate + ATP = beta-D-fructose 1,6-bisphosphate + ADP + H(+). It functions in the pathway carbohydrate degradation; glycolysis; D-glyceraldehyde 3-phosphate and glycerone phosphate from D-glucose: step 3/4. Allosterically activated by ADP and other diphosphonucleosides, and allosterically inhibited by phosphoenolpyruvate. Its function is as follows. Catalyzes the phosphorylation of D-fructose 6-phosphate to fructose 1,6-bisphosphate by ATP, the first committing step of glycolysis. The chain is ATP-dependent 6-phosphofructokinase from Streptococcus equi subsp. equi (strain 4047).